Here is a 669-residue protein sequence, read N- to C-terminus: Filensin (669 aa).

A head region spans residues M1 to G33. The residue at position 5 (S5) is a Phosphoserine. The 286-residue stretch at G33 to L318 folds into the IF rod domain. Residues L34–F68 are coil 1A. Residue A35 is modified to N-acetylalanine. Residues Q69–P77 are linker 1. The tract at residues E78 to Q177 is coil 1B. Residues T178–S194 form a linker 12 region. Positions L195–L318 are coil 2. The segment at S319–A669 is tail. S339 is modified (phosphoserine). Disordered regions lie at residues V380 to I435, R449 to G468, and H505 to S618. Residues S408–G417 are compositionally biased toward gly residues. A lipid anchor (N-myristoyl glycine) is attached at G432. S513 is modified (phosphoserine). Residues N545–R570 are compositionally biased toward basic and acidic residues. Polar residues predominate over residues P583 to S593. A Phosphothreonine modification is found at T585.

It belongs to the intermediate filament family. In terms of assembly, part of a complex required for lens intermediate filament formation composed of BFSP1, BFSP2 and CRYAA. Identified in a complex that contains VIM, EZR, AHNAK, BFSP1, BFSP2, ANK2, PLEC, PRX and spectrin. Found in a complex composed of PPL (via C-terminal linker domain), BFSP1 and BFSP2 in the retinal lens. Within the complex interacts with BFSP2. Interacts (via C-terminus) with MIP (via C-terminus) in aged lens fiber cells. In terms of processing, proteolytically cleaved during lens cell fiber differentiation with increased fragmentation as fiber cell age increases. Myristoylated at Gly-432 following proteolytic cleavage at Asp-431. Post-translationally, acetylated at Ala-35 following proteolytic cleavage at Leu-34. In terms of tissue distribution, detected in eye lens fiber cells (at protein level). Expressed in retinal lens epithelial cells (at protein level).

It localises to the cell membrane. The protein localises to the cytoplasm. Its subcellular location is the cytoskeleton. It is found in the cell cortex. Functionally, required for the correct formation of lens intermediate filaments as part of a complex composed of BFSP1, BFSP2 and CRYAA. Involved in altering the calcium regulation of MIP water permeability. This Mus musculus (Mouse) protein is Filensin (Bfsp1).